A 43-amino-acid polypeptide reads, in one-letter code: Protein PsbN (43 aa).

The chain crosses the membrane as a helical span at residues 7-29 (IVIFVSSLLLGITTYSVYTAFGP).

It belongs to the PsbN family.

It is found in the plastid. Its subcellular location is the chloroplast thylakoid membrane. In terms of biological role, may play a role in photosystem I and II biogenesis. This Phaeodactylum tricornutum (strain CCAP 1055/1) protein is Protein PsbN.